Here is a 199-residue protein sequence, read N- to C-terminus: Urease accessory protein UreG (199 aa).

Residue 8–15 (GPVGSGKT) coordinates GTP.

This sequence belongs to the SIMIBI class G3E GTPase family. UreG subfamily. As to quaternary structure, homodimer. UreH, UreF and UreG form a complex that acts as a GTP-hydrolysis-dependent molecular chaperone, activating the urease apoprotein by helping to assemble the nickel containing metallocenter of UreC. The UreE protein probably delivers the nickel.

The protein localises to the cytoplasm. Facilitates the functional incorporation of the urease nickel metallocenter. This process requires GTP hydrolysis, probably effectuated by UreG. This is Urease accessory protein UreG from Helicobacter acinonychis (strain Sheeba).